The primary structure comprises 331 residues: L-lactate dehydrogenase A chain (331 aa).

Residues 29–57 (GMVG…MEDK) and R98 each bind NAD(+). The substrate site is built by R105, N137, and R168. Residue N137 participates in NAD(+) binding. Residue H192 is the Proton acceptor of the active site. Substrate is bound at residue T247.

Belongs to the LDH/MDH superfamily. LDH family. As to quaternary structure, homotetramer.

The protein localises to the cytoplasm. The enzyme catalyses (S)-lactate + NAD(+) = pyruvate + NADH + H(+). It functions in the pathway fermentation; pyruvate fermentation to lactate; (S)-lactate from pyruvate: step 1/1. In terms of biological role, interconverts simultaneously and stereospecifically pyruvate and lactate with concomitant interconversion of NADH and NAD(+). This Harpagifer antarcticus (Antarctic spiny plunderfish) protein is L-lactate dehydrogenase A chain (ldha).